Here is a 231-residue protein sequence, read N- to C-terminus: MVREAGEVVAIVPAAGSGERLAVGVPKAFYQLDGQTLIERAVDGLLDSGVVDTVVVAVPADRTDEARQILGHRAMIVAGGSNRTDTVNLALTVLSGTAEPEFVLVHDAARALTPPALVARVVEALRDGYAAVVPVLPLSDTIKAVDANGVVLGTPERAGLRAVQTPQGFTTDLLLRSYQRGSLDLPAAEYTDDASLVEHIGGQVQVVDGDPLAFKITTKLDLLLAQAIVRG.

The protein belongs to the IspD/TarI cytidylyltransferase family. IspD subfamily.

The enzyme catalyses 2-C-methyl-D-erythritol 4-phosphate + CTP + H(+) = 4-CDP-2-C-methyl-D-erythritol + diphosphate. It functions in the pathway isoprenoid biosynthesis; isopentenyl diphosphate biosynthesis via DXP pathway; isopentenyl diphosphate from 1-deoxy-D-xylulose 5-phosphate: step 2/6. Its function is as follows. Catalyzes the formation of 4-diphosphocytidyl-2-C-methyl-D-erythritol from CTP and 2-C-methyl-D-erythritol 4-phosphate (MEP). The polypeptide is 2-C-methyl-D-erythritol 4-phosphate cytidylyltransferase (Mycobacterium bovis (strain BCG / Pasteur 1173P2)).